The chain runs to 2080 residues: Dedicator of cytokinesis protein 6 (2080 aa).

The segment covering 20-31 (EVRKQVSRERSG) has biased composition (basic and acidic residues). 3 disordered regions span residues 20 to 44 (EVRK…SSLG), 156 to 189 (QDTP…SGAS), and 408 to 441 (PQDR…GDDA). Over residues 32–42 (SPHSSRRSSSS) the composition is skewed to low complexity. Residue S178 is modified to Phosphoserine. The segment covering 408 to 425 (PQDRDSDSEGERRPTWAE) has biased composition (basic and acidic residues). Residues 546-712 (RNLLFVYPHS…GVFSVELTAV (167 aa)) form the C2 DOCK-type domain. R863 carries the post-translational modification Omega-N-methylarginine. S870, S878, and S882 each carry phosphoserine. The tract at residues 1101 to 1123 (ASPSPSVSSTTSQSSTFSSQAPD) is disordered. Residues 1104-1122 (SPSVSSTTSQSSTFSSQAP) are compositionally biased toward low complexity. S1341 is subject to Phosphoserine. Positions 1620 to 2056 (RGYQGSPDLR…LQPLLTQRLP (437 aa)) constitute a DOCKER domain. At T2064 the chain carries Phosphothreonine. 2 positions are modified to phosphoserine: S2065 and S2069.

Belongs to the DOCK family. As to expression, widely expressed with highest levels in lung and heart.

Its subcellular location is the cytoplasm. It is found in the perinuclear region. Its function is as follows. Acts as a guanine nucleotide exchange factor (GEF) for CDC42 and RAC1 small GTPases. Through its activation of CDC42 and RAC1, regulates neurite outgrowth in an vitro differentiation system. This Mus musculus (Mouse) protein is Dedicator of cytokinesis protein 6 (Dock6).